The following is a 437-amino-acid chain: UDP-sugar transporter protein SLC35A5 (437 aa).

The Cytoplasmic segment spans residues 1–21 (MKVIFLRQLKTRGMERKCSRR). A helical membrane pass occupies residues 22 to 42 (PGLGPPTLYTFLLGIIFITLS). At 43 to 65 (SSRILLVKYSANEENKYDYLPTT) the chain is on the lumenal side. The chain crosses the membrane as a helical span at residues 66–86 (VNVCSELMKLILCILVSLCVI). The Cytoplasmic portion of the chain corresponds to 87–106 (KKEDHQSRHLRCTSWKEFSS). A helical membrane pass occupies residues 107–129 (FMKWSIPAFLYFLDNLIVFYVLS). Residues 130–132 (YLQ) are Lumenal-facing. Residues 133–155 (PAMAVIFSNFSIITTALLFRIVL) traverse the membrane as a helical segment. Topologically, residues 156–158 (KRH) are cytoplasmic. Residues 159–179 (LNWIQWASLLILFLSIVALTA) traverse the membrane as a helical segment. Residues 180–241 (STKTSQHELA…TTARVFSHIR (62 aa)) lie on the Lumenal side of the membrane. Asn217 is a glycosylation site (N-linked (GlcNAc...) asparagine). A helical transmembrane segment spans residues 242–262 (LGLGHVLIIVQCFISSMANIY). Residues 263-276 (NEKILKEGTQLTES) lie on the Cytoplasmic side of the membrane. A helical transmembrane segment spans residues 277 to 297 (IFIQNSKLYFFGIVFNGLTLV). The Lumenal portion of the chain corresponds to 298 to 316 (LQSSNRDQIQNCGFFYGHN). The helical transmembrane segment at 317–337 (AFSVVLIFVTAFQGLSVAFIL) threads the bilayer. Residues 338-343 (KFLDNM) are Cytoplasmic-facing. The helical transmembrane segment at 344-364 (FHVLMAQVTTVIITTVSVLVF) threads the bilayer. The Lumenal portion of the chain corresponds to 365-367 (DFR). Residues 368 to 388 (PSLDFFLEAPSVLLSIFIYNA) traverse the membrane as a helical segment. The Cytoplasmic segment spans residues 389–437 (SKPQNLECAPKQERIRHLSGSLWERSSGDGEELERLTKLKSDDSDDDTL). A phosphoserine mark is found at Ser407, Ser429, and Ser432. The disordered stretch occupies residues 412-437 (ERSSGDGEELERLTKLKSDDSDDDTL). The segment covering 421–430 (LERLTKLKSD) has biased composition (basic and acidic residues).

Belongs to the nucleotide-sugar transporter family. SLC35A subfamily. In terms of assembly, probably forms homooligomers and heterooligomers with SLC35A1, SLC35A2, SLC35A3 and SLC35A4.

It is found in the golgi apparatus membrane. It catalyses the reaction UMP(out) + UDP-alpha-D-glucuronate(in) = UMP(in) + UDP-alpha-D-glucuronate(out). It carries out the reaction UMP(out) + UDP-N-acetyl-alpha-D-glucosamine(in) = UMP(in) + UDP-N-acetyl-alpha-D-glucosamine(out). The enzyme catalyses UDP-N-acetyl-alpha-D-galactosamine(in) + UMP(out) = UDP-N-acetyl-alpha-D-galactosamine(out) + UMP(in). Probable UDP-sugar:UMP transmembrane antiporter involved in UDP-alpha-D-glucuronate/UDP-GlcA, UDP-GlcNAc/UDP-N-acetyl-alpha-D-glucosamine and UDP-N-acetyl-alpha-D-galactosamine/UDP-GalNAc transport from the cytosol to the lumen of the Golgi. The protein is UDP-sugar transporter protein SLC35A5 of Mus musculus (Mouse).